The following is an 88-amino-acid chain: U-scoloptoxin(12)-Sa1a (88 aa).

The N-terminal stretch at 1-20 is a signal peptide; sequence MKYMIITVVILFTCALKMFC.

The protein belongs to the scoloptoxin-12 family. Contains 3 disulfide bonds. In terms of tissue distribution, expressed by the venom gland.

It localises to the secreted. This is U-scoloptoxin(12)-Sa1a from Scolopendra alternans (Florida Keys giant centipede).